We begin with the raw amino-acid sequence, 466 residues long: GTPase Der (466 aa).

EngA-type G domains follow at residues 30 to 193 (PVVA…PEVS) and 203 to 376 (RRVA…ASWD). GTP is bound by residues 36 to 43 (GRPNVGKS), 83 to 87 (DTGGW), 145 to 148 (NKVD), 209 to 216 (GKPNVGKS), 256 to 260 (DTAGL), and 321 to 324 (NKWD). The 83-residue stretch at 377–459 (TRIATGPLNS…PIRINVRVRE (83 aa)) folds into the KH-like domain.

It belongs to the TRAFAC class TrmE-Era-EngA-EngB-Septin-like GTPase superfamily. EngA (Der) GTPase family. Associates with the 50S ribosomal subunit.

Functionally, GTPase that plays an essential role in the late steps of ribosome biogenesis. This Mycolicibacterium paratuberculosis (strain ATCC BAA-968 / K-10) (Mycobacterium paratuberculosis) protein is GTPase Der.